Reading from the N-terminus, the 23-residue chain is Nephrotoxin PsTX-115 (23 aa).

Its subcellular location is the secreted. It is found in the nematocyst. Its function is as follows. Nephrotoxin. When injected intravenously in rats, causes severe destructive glomerular changes. At 24 hours post-injection partial disruption of the glomerular basement membrane, massive thrombus formation in glomerular capillaries, severe mesangiolysis and infiltrating cells were observed in the majority of glomeruli. This chain is Nephrotoxin PsTX-115, found in Phyllodiscus semoni (Night anemone).